A 289-amino-acid polypeptide reads, in one-letter code: Four and a half LIM domains protein 3 (289 aa).

S2 carries the post-translational modification N-acetylserine. Residues 7–31 (CAKCNESLYGRKYIQTDSGPYCVPC) form a C4-type zinc finger. 2 consecutive LIM zinc-binding domains span residues 40–92 (CAEC…CNEC) and 101–153 (CSAC…CVPC). Residue K157 is modified to N6-acetyllysine. LIM zinc-binding domains lie at 162–212 (CARC…CVAC) and 221–275 (CSSC…FVPD). K244 carries the N6-acetyllysine modification.

As to quaternary structure, interacts with SOX15; the interaction recruits FHL3 to FOXK1 promoters where it acts as a transcriptional coactivator of FOXK1. In terms of tissue distribution, expressed in myogenic progenitor cells (at protein level). Expressed in skeletal striated muscle and the heart. Expressed to a lesser extent, in lung, and kidney. Expressed in skin and skeletal muscles such as the masseter, tongue, tibialis anterior and plantar muscles.

It localises to the nucleus. The protein resides in the cytoplasm. Functionally, recruited by SOX15 to FOXK1 promoters where it acts as a transcriptional coactivator of FOXK1. In Mus musculus (Mouse), this protein is Four and a half LIM domains protein 3 (Fhl3).